The sequence spans 801 residues: Na(+)/H(+) antiporter subunit A1 (801 aa).

Transmembrane regions (helical) follow at residues M1 to L21, I28 to L48, L79 to I99, L117 to F137, L166 to P186, P206 to F226, I265 to F285, I300 to A320, F337 to I357, L373 to S393, L427 to I447, I472 to P492, G522 to V542, L591 to F611, I623 to K643, L646 to F666, L671 to Y691, L707 to A727, and M764 to I784.

This sequence belongs to the CPA3 antiporters (TC 2.A.63) subunit A family. May form a heterooligomeric complex that consists of seven subunits: mnhA1, mnhB1, mnhC1, mnhD1, mnhE1, mnhF1 and mnhG1.

The protein resides in the cell membrane. Mnh complex is a Na(+)/H(+) antiporter involved in Na(+) excretion. This chain is Na(+)/H(+) antiporter subunit A1 (mnhA1), found in Staphylococcus aureus (strain bovine RF122 / ET3-1).